We begin with the raw amino-acid sequence, 263 residues long: uncharacterized protein (263 aa).

Residues 22 to 44 (IDGSDDQSDRTRSSSGDSTSNSL) are disordered. The segment covering 34–43 (SSSGDSTSNS) has biased composition (low complexity).

It is found in the mitochondrion. This is an uncharacterized protein from Schizosaccharomyces pombe (strain 972 / ATCC 24843) (Fission yeast).